The sequence spans 270 residues: Interleukin-1 alpha (270 aa).

Positions 1–114 (MAKVPDLFED…HDLEETIQPR (114 aa)) are excised as a propeptide. A glycan (N-linked (GlcNAc...) asparagine) is linked at N64. K85 is subject to N6-acetyllysine. Residues 85–89 (KKRRL) are nuclear localization signal (NLS). S90 is modified (phosphoserine). N-linked (GlcNAc...) asparagine glycans are attached at residues N139 and N143.

This sequence belongs to the IL-1 family. As to quaternary structure, monomer. Interacts with TMED10; the interaction mediates the translocation from the cytoplasm into the ERGIC (endoplasmic reticulum-Golgi intermediate compartment) and thereby secretion. Interacts with IL1R1. Interacts with S100A13; this interaction is the first step in the export of IL1A, followed by direct translocation of this complex across the plasma membrane. Acetylated within its nuclear localization sequence, which impacts subcellular localization. In terms of processing, proteolytic processed by CAPN1 in a calcium-dependent manner. Cleavage from 31 kDa precursor to 18 kDa biologically active molecules. Post-translationally, phosphorylated. Phosphorylation greatly enhances susceptibility to digestion and promotes the conversion of pre-IL1A alpha to the biologically active IL1A.

Its subcellular location is the nucleus. It is found in the cytoplasm. The protein resides in the secreted. Functionally, cytokine constitutively present intracellularly in nearly all resting non-hematopoietic cells that plays an important role in inflammation and bridges the innate and adaptive immune systems. After binding to its receptor IL1R1 together with its accessory protein IL1RAP, forms the high affinity interleukin-1 receptor complex. Signaling involves the recruitment of adapter molecules such as MYD88, IRAK1 or IRAK4. In turn, mediates the activation of NF-kappa-B and the three MAPK pathways p38, p42/p44 and JNK pathways. Within the cell, acts as an alarmin and cell death results in its liberation in the extracellular space after disruption of the cell membrane to induce inflammation and alert the host to injury or damage. In addition to its role as a danger signal, which occurs when the cytokine is passively released by cell necrosis, directly senses DNA damage and acts as a signal for genotoxic stress without loss of cell integrity. This Mus musculus (Mouse) protein is Interleukin-1 alpha.